The sequence spans 238 residues: MSDLQNQMKQAVADAAVQQFRDGMVVGLGSGSTAALMIKGLGERLAAGQLSDIVGVTTSFQGEVLAAELGIPLRSLNAVDRIDLAIDGADEVDPAFQLIKGGGACHVQEKLVAARADRFIVVVDSTKLVERLNLGFLLPVEVLPGAWVQISQQLKAMGGDAELRMATRKAGPVVTDQGNLVLDVRFEGGIADPASLEKEINNIPGVLENGLFVNLADEVLVGQIDGGVASARSLEKAG.

Substrate-binding positions include 30–33 (SGST), 87–90 (DGAD), and 100–103 (KGGG). Catalysis depends on E109, which acts as the Proton acceptor. K127 lines the substrate pocket.

This sequence belongs to the ribose 5-phosphate isomerase family. In terms of assembly, homodimer.

It catalyses the reaction aldehydo-D-ribose 5-phosphate = D-ribulose 5-phosphate. It functions in the pathway carbohydrate degradation; pentose phosphate pathway; D-ribose 5-phosphate from D-ribulose 5-phosphate (non-oxidative stage): step 1/1. In terms of biological role, catalyzes the reversible conversion of ribose-5-phosphate to ribulose 5-phosphate. The protein is Ribose-5-phosphate isomerase A of Synechococcus sp. (strain WH7803).